We begin with the raw amino-acid sequence, 94 residues long: Putative FXYD domain-containing ion transport regulator 8 (94 aa).

A signal peptide spans 1-18 (MEVVLIFVYSLLVPVVLA). The Extracellular portion of the chain corresponds to 19 to 34 (SAAKEKEIDPFHYNYQ). The chain crosses the membrane as a helical span at residues 35–58 (TLRIGGLVFDVVLFLVPSCHLLSH). Topologically, residues 59 to 94 (RCKCSFNQKPQDPGDKEAQVENFITANAKEPQKAKN) are cytoplasmic. Residues 66-94 (QKPQDPGDKEAQVENFITANAKEPQKAKN) form a disordered region.

Belongs to the FXYD family.

It localises to the membrane. The protein is Putative FXYD domain-containing ion transport regulator 8 (FXYD6P3) of Homo sapiens (Human).